The primary structure comprises 867 residues: Probable alpha,alpha-trehalose-phosphate synthase [UDP-forming] 9 (867 aa).

S5 bears the Phosphoserine mark. At T32 the chain carries Phosphothreonine. The tract at residues 59–546 (ERKIIVANML…AKSFMQDLER (488 aa)) is glycosyltransferase.

In the N-terminal section; belongs to the glycosyltransferase 20 family. It in the C-terminal section; belongs to the trehalose phosphatase family.

It carries out the reaction D-glucose 6-phosphate + UDP-alpha-D-glucose = alpha,alpha-trehalose 6-phosphate + UDP + H(+). This is Probable alpha,alpha-trehalose-phosphate synthase [UDP-forming] 9 (TPS9) from Arabidopsis thaliana (Mouse-ear cress).